The following is a 138-amino-acid chain: HTH-type transcriptional regulator CueR (138 aa).

The HTH merR-type domain maps to 1–69 (MNISDVAKKT…LEECGELVNL (69 aa)). The segment at residues 4–23 (SDVAKKTGLTSKAIRFYEEK) is a DNA-binding region (H-T-H motif). Cu(+) is bound by residues Cys112 and Cys120.

Homodimer.

It localises to the cytoplasm. Regulates the transcription of the copA and cueO genes. It detects cytoplasmic copper stress and activates transcription in response to increasing copper concentrations. This Salmonella typhi protein is HTH-type transcriptional regulator CueR (cueR).